The following is a 493-amino-acid chain: Guanosine-5'-triphosphate,3'-diphosphate pyrophosphatase (493 aa).

The protein belongs to the GppA/Ppx family. GppA subfamily.

The enzyme catalyses guanosine 3'-diphosphate 5'-triphosphate + H2O = guanosine 3',5'-bis(diphosphate) + phosphate + H(+). It functions in the pathway purine metabolism; ppGpp biosynthesis; ppGpp from GTP: step 2/2. Catalyzes the conversion of pppGpp to ppGpp. Guanosine pentaphosphate (pppGpp) is a cytoplasmic signaling molecule which together with ppGpp controls the 'stringent response', an adaptive process that allows bacteria to respond to amino acid starvation, resulting in the coordinated regulation of numerous cellular activities. The protein is Guanosine-5'-triphosphate,3'-diphosphate pyrophosphatase of Salmonella agona (strain SL483).